A 126-amino-acid polypeptide reads, in one-letter code: Small ribosomal subunit protein uS11 (126 aa).

The protein belongs to the universal ribosomal protein uS11 family. Part of the 30S ribosomal subunit. Interacts with proteins S7 and S18. Binds to IF-3.

Its function is as follows. Located on the platform of the 30S subunit, it bridges several disparate RNA helices of the 16S rRNA. Forms part of the Shine-Dalgarno cleft in the 70S ribosome. This is Small ribosomal subunit protein uS11 from Desulfotalea psychrophila (strain LSv54 / DSM 12343).